The primary structure comprises 27 residues: Potassium channel toxin alpha-KTx 9.11 (27 aa).

Cystine bridges form between C3–C19, C6–C23, and C10–C25.

This sequence belongs to the short scorpion toxin superfamily. Potassium channel inhibitor family. Alpha-KTx 09 subfamily. As to expression, expressed by the venom gland.

The protein localises to the secreted. Its function is as follows. May play a role in blocking voltage-gated potassium channels Kv1.2/KCNA2, Kv1.3/KCNA3 and Kv1.6/KCNA6 to a lesser extent. The polypeptide is Potassium channel toxin alpha-KTx 9.11 (Mesobuthus gibbosus (Mediterranean checkered scorpion)).